Consider the following 753-residue polypeptide: Photosystem I P700 chlorophyll a apoprotein A1 (753 aa).

8 helical membrane-spanning segments follow: residues 73–96 (IFSAHFGQLAIIFIWLSGMYYHGA), 159–182 (LYCTAIGALIFAALMLFAGWFHYH), 198–222 (LNHHLAGLLGLGSLSWAGHQIHVSL), 294–312 (TAHHHLAIAVLFLIAGHMY), 349–372 (WHAQLAVNLAMLGSLTIVVAHHMY), 388–414 (LSLFTHHMWIGGFIIVGAAAHAAIFMV), 436–458 (AIVSHLNWVCIFLGFHSFGLYIH), and 534–552 (FLVHHIHAFTIHVTVLILL). [4Fe-4S] cluster is bound by residues C576 and C585. 2 helical membrane passes run 592 to 613 (HVFLGLFWMYNAISVVIFHFSW) and 667 to 689 (LSAYGLLFLGAHFVWAFSLMFLF). H678 provides a ligand contact to chlorophyll a'. Chlorophyll a is bound by residues M686 and Y694. W695 contributes to the phylloquinone binding site. The chain crosses the membrane as a helical span at residues 727-747 (AVGVAHYLLGGIVTTWAFFLA).

Belongs to the PsaA/PsaB family. In terms of assembly, the PsaA/B heterodimer binds the P700 chlorophyll special pair and subsequent electron acceptors. PSI consists of a core antenna complex that captures photons, and an electron transfer chain that converts photonic excitation into a charge separation. The eukaryotic PSI reaction center is composed of at least 11 subunits. Requires P700 is a chlorophyll a/chlorophyll a' dimer, A0 is one or more chlorophyll a, A1 is one or both phylloquinones and FX is a shared 4Fe-4S iron-sulfur center. as cofactor.

Its subcellular location is the plastid. The protein localises to the chloroplast thylakoid membrane. The catalysed reaction is reduced [plastocyanin] + hnu + oxidized [2Fe-2S]-[ferredoxin] = oxidized [plastocyanin] + reduced [2Fe-2S]-[ferredoxin]. PsaA and PsaB bind P700, the primary electron donor of photosystem I (PSI), as well as the electron acceptors A0, A1 and FX. PSI is a plastocyanin-ferredoxin oxidoreductase, converting photonic excitation into a charge separation, which transfers an electron from the donor P700 chlorophyll pair to the spectroscopically characterized acceptors A0, A1, FX, FA and FB in turn. Oxidized P700 is reduced on the lumenal side of the thylakoid membrane by plastocyanin. The chain is Photosystem I P700 chlorophyll a apoprotein A1 from Pinus thunbergii (Japanese black pine).